Consider the following 140-residue polypeptide: Truncated tyrosine phosphatase D1 (140 aa).

The region spanning methionine 1–lysine 140 is the Tyrosine-protein phosphatase domain.

The protein belongs to the protein-tyrosine phosphatase family.

The polypeptide is Truncated tyrosine phosphatase D1 (D1) (Microplitis demolitor bracovirus (isolate Webb) (MdBV)).